The chain runs to 299 residues: MTTDIVWPPPVRQVRAYRNIVVDGACNIRCTYCEVKKTKVDQPATIRSLDRIFAEYEPDAVLFRVESDGEITLYPKIVDHLQKRAAEGYRVEVLSNGTKLPRALEGRPDLLWVFSVDGHTEAMNAKRGLKQPQIDRILDAAVELGAELQTVYWGQPVEEVNAYIDLLESRGYRGLLHFMPLLAFKGRPLTVNLRYQDLHPADFLAPPEYFRRWNHIFETGRRDAVCDQITNGYNYQVSGDEIRMVKCDCYSVPKHLVHGFGPIREFDDWPCGTCIANQEFNNSRERMRVPQGRIPLPLV.

In terms of domain architecture, Radical SAM core spans 10-222 (PVRQVRAYRN…WNHIFETGRR (213 aa)). Cysteine 26, cysteine 30, cysteine 33, cysteine 226, and cysteine 247 together coordinate [4Fe-4S] cluster. The Proton donor role is filled by cysteine 249. The [4Fe-4S] cluster site is built by cysteine 271 and cysteine 274.

This sequence belongs to the radical SAM superfamily. [4Fe-4S] cluster serves as cofactor.

It carries out the reaction neomycin C + AH2 + S-adenosyl-L-methionine = neomycin B + 5'-deoxyadenosine + L-methionine + A + H(+). It participates in antibiotic biosynthesis; neomycin biosynthesis. Functionally, catalyzes the last step of neomycin B biosynthesis, i.e. the irreversible epimerization at C-5''' of neomycin C to give neomycin B. To a lesser extent, is also able to convert neomycin Y2 to neomycin Y1. The chain is Neomycin C epimerase from Streptomyces fradiae (Streptomyces roseoflavus).